We begin with the raw amino-acid sequence, 164 residues long: uncharacterized protein (164 aa).

The first 25 residues, 1–25, serve as a signal peptide directing secretion; it reads MMKTVKHLLCCAIAASALISTGVHA.

This is an uncharacterized protein from Escherichia coli (strain K12).